Consider the following 221-residue polypeptide: NAD(P)H-hydrate epimerase (221 aa).

Residues 10–211 (MQQYDQYTIN…DIGIYSPAEL (202 aa)) form the YjeF N-terminal domain. 58–62 (NNGGD) contacts (6S)-NADPHX. K(+) is bound by residues N59 and D121. (6S)-NADPHX is bound by residues 125-131 (GIGLSKP) and D154. S157 is a K(+) binding site.

This sequence belongs to the NnrE/AIBP family. The cofactor is K(+).

The catalysed reaction is (6R)-NADHX = (6S)-NADHX. The enzyme catalyses (6R)-NADPHX = (6S)-NADPHX. Functionally, catalyzes the epimerization of the S- and R-forms of NAD(P)HX, a damaged form of NAD(P)H that is a result of enzymatic or heat-dependent hydration. This is a prerequisite for the S-specific NAD(P)H-hydrate dehydratase to allow the repair of both epimers of NAD(P)HX. This Weissella koreensis (strain KACC 15510) protein is NAD(P)H-hydrate epimerase.